A 70-amino-acid chain; its full sequence is MLKIGVMLSIILVLFPLATLQLVAERPAAERYAENKQDLNPDERRNYLVDLGVERTCCTACNIPPCKCCA.

Residues 1–20 (MLKIGVMLSIILVLFPLATL) form the signal peptide. Residues 21 to 55 (QLVAERPAAERYAENKQDLNPDERRNYLVDLGVER) constitute a propeptide that is removed on maturation.

In terms of tissue distribution, expressed by the venom duct.

Its subcellular location is the secreted. This chain is Conotoxin ba3a, found in Conus bayani (Bayan's cone).